The primary structure comprises 217 residues: Biotin transport regulator (217 aa).

The disordered stretch occupies residues 14–49; the sequence is GDGLGNLAGRSADPTGAADKGESGVPVPPTGFVDPT.

In terms of biological role, may be part of a system that R.meliloti uses to respond to plant (alfalfa) biotin signals. This Rhizobium meliloti (strain 1021) (Ensifer meliloti) protein is Biotin transport regulator (bioS).